Here is a 992-residue protein sequence, read N- to C-terminus: Disks large-associated protein 1 (992 aa).

Disordered regions lie at residues Ser-154 to Ser-209 and Lys-355 to Val-375. Ser-169 carries the post-translational modification Phosphoserine. Residues Ser-195–Ser-209 show a composition bias toward low complexity. Residues Ser-362, Ser-365, Ser-368, Ser-372, Ser-389, Ser-418, Ser-421, Ser-425, Ser-428, Ser-437, Ser-509, Ser-516, and Ser-578 each carry the phosphoserine modification. Thr-579 is subject to Phosphothreonine. 2 positions are modified to phosphoserine: Ser-581 and Ser-605. Thr-606 bears the Phosphothreonine mark. Phosphoserine is present on residues Ser-608 and Ser-611. Interaction with DYL2 regions lie at residues Leu-665–Glu-676 and Ser-687–Glu-698. The segment at Trp-914–Ser-980 is disordered. Composition is skewed to basic and acidic residues over residues Asp-918–Ala-927 and Ile-943–Lys-958. Phosphoserine is present on Ser-947. A compositionally biased stretch (polar residues) spans Val-969–Ala-978. The PDZ-binding motif lies at Thr-990–Leu-992.

The protein belongs to the SAPAP family. As to quaternary structure, interacts with guanylate kinase-like domain of DLG1, DLG2, DLG3, DLG4 and AIP1. Interacts with the PDZ domain of SHANK1, SHANK2 and SHANK3. Found in a complex with DLG4 and SHANK1, SHANK2 or SHANK3. Found in a complex with DLG4 and BEGAIN. Interacts with DYL2 and LRFN1. Interacts with MPP2 (via the SH3-Guanylate kinase-like sub-module). In terms of processing, ubiquitinated by TRIM3; leading to proteasomal degradation. As to expression, expressed in brain and testis.

The protein resides in the cell membrane. Its subcellular location is the postsynaptic density. The protein localises to the synapse. Its function is as follows. Part of the postsynaptic scaffold in neuronal cells. The protein is Disks large-associated protein 1 of Rattus norvegicus (Rat).